The chain runs to 462 residues: Zinc transporter 6-B (462 aa).

Over 1–33 the chain is Cytoplasmic; it reads MGTIYLFRKTQRSLLGKLTQEFRLVTADRRSWK. Residues 34 to 54 traverse the membrane as a helical segment; that stretch reads ILLFGAINVVCTGFLLTWCSS. The Extracellular portion of the chain corresponds to 55–64; that stretch reads TNSMALTAYT. The chain crosses the membrane as a helical span at residues 65-85; that stretch reads YLTIFDLFSLITSLISYWVMM. Over 86–98 the chain is Cytoplasmic; that stretch reads KKPSPTYSFGFER. A helical transmembrane segment spans residues 99-119; it reads LEVLAVFASTVLAQLGALFIL. The Extracellular segment spans residues 120–134; sequence KESAERFLEQPEIHT. The helical transmembrane segment at 135 to 155 threads the bilayer; sequence GRLLVGTFVALFFNLFTMLSI. Residues 156 to 200 lie on the Cytoplasmic side of the membrane; it reads RNKPFAYVSEAASTSWLQEHVADLSRSLCGVIPGLSSIFLPRMNP. The chain crosses the membrane as a helical span at residues 201 to 221; that stretch reads FVLIDIAGALALCITYMLIEI. The Extracellular segment spans residues 222-223; that stretch reads NN. A helical transmembrane segment spans residues 224-244; it reads YFAVDTASAIAIAVMTFGTMY. Over 245 to 462 the chain is Cytoplasmic; the sequence is PMSVYSGKVL…TPGQFTQFRQ (218 aa).

This sequence belongs to the cation diffusion facilitator (CDF) transporter (TC 2.A.4) family. SLC30A subfamily. Heterodimer with SLC30A5; form a functional zinc ion transmembrane transporter.

It is found in the golgi apparatus. It localises to the trans-Golgi network membrane. In terms of biological role, has probably no intrinsic transporter activity but together with SLC30A5 forms a functional zinc ion:proton antiporter heterodimer, mediating zinc entry into the lumen of organelles along the secretory pathway. As part of that zinc ion:proton antiporter, contributes to zinc ion homeostasis within the early secretory pathway and regulates the activation and folding of enzymes like alkaline phosphatases and enzymes involved in phosphatidylinositol glycan anchor biosynthesis. This is Zinc transporter 6-B (slc30a6-b) from Xenopus laevis (African clawed frog).